A 212-amino-acid chain; its full sequence is Thymidylate kinase (212 aa).

13–20 (GLEGAGKS) lines the ATP pocket.

It belongs to the thymidylate kinase family.

It carries out the reaction dTMP + ATP = dTDP + ADP. Its function is as follows. Phosphorylation of dTMP to form dTDP in both de novo and salvage pathways of dTTP synthesis. This chain is Thymidylate kinase, found in Legionella pneumophila (strain Corby).